We begin with the raw amino-acid sequence, 25 residues long: Chlorocatechol 1,2-dioxygenase 1 (25 aa).

This sequence belongs to the intradiol ring-cleavage dioxygenase family. It depends on Fe(3+) as a cofactor.

It carries out the reaction 3,5-dichlorocatechol + O2 = (2E,4E)-2,4-dichloromuconate + 2 H(+). The protein operates within xenobiotic degradation; 2-(2,4-dichlorophenoxy)propanoate degradation. The sequence is that of Chlorocatechol 1,2-dioxygenase 1 (tfdC) from Delftia acidovorans (Pseudomonas acidovorans).